Reading from the N-terminus, the 180-residue chain is NAD(P)H-quinone oxidoreductase subunit I, chloroplastic (180 aa).

4Fe-4S ferredoxin-type domains follow at residues 55 to 84 and 95 to 124; these read GRIHFEFDKCIACEVCVRVCPIDLPVVDWR and LNYSIDFGICIFCGNCVEYCPTNCLSMTEE. 8 residues coordinate [4Fe-4S] cluster: Cys64, Cys67, Cys70, Cys74, Cys104, Cys107, Cys110, and Cys114.

Belongs to the complex I 23 kDa subunit family. In terms of assembly, NDH is composed of at least 16 different subunits, 5 of which are encoded in the nucleus. [4Fe-4S] cluster serves as cofactor.

Its subcellular location is the plastid. The protein localises to the chloroplast thylakoid membrane. It catalyses the reaction a plastoquinone + NADH + (n+1) H(+)(in) = a plastoquinol + NAD(+) + n H(+)(out). The enzyme catalyses a plastoquinone + NADPH + (n+1) H(+)(in) = a plastoquinol + NADP(+) + n H(+)(out). NDH shuttles electrons from NAD(P)H:plastoquinone, via FMN and iron-sulfur (Fe-S) centers, to quinones in the photosynthetic chain and possibly in a chloroplast respiratory chain. The immediate electron acceptor for the enzyme in this species is believed to be plastoquinone. Couples the redox reaction to proton translocation, and thus conserves the redox energy in a proton gradient. This chain is NAD(P)H-quinone oxidoreductase subunit I, chloroplastic, found in Amborella trichopoda.